Reading from the N-terminus, the 339-residue chain is Dihydroorotase (339 aa).

Zn(2+) is bound by residues His-12 and His-14. Substrate contacts are provided by residues His-14–Arg-16 and Asn-40. Residues Lys-94, His-133, His-167, and Asp-239 each contribute to the Zn(2+) site. Residue Lys-94 is modified to N6-carboxylysine. Position 133 (His-133) interacts with substrate. Asp-239 is an active-site residue. The substrate site is built by His-243 and Ala-255.

The protein belongs to the metallo-dependent hydrolases superfamily. DHOase family. Class II DHOase subfamily. Homodimer. The cofactor is Zn(2+).

The catalysed reaction is (S)-dihydroorotate + H2O = N-carbamoyl-L-aspartate + H(+). It participates in pyrimidine metabolism; UMP biosynthesis via de novo pathway; (S)-dihydroorotate from bicarbonate: step 3/3. Functionally, catalyzes the reversible cyclization of carbamoyl aspartate to dihydroorotate. The sequence is that of Dihydroorotase from Helicobacter pylori (strain J99 / ATCC 700824) (Campylobacter pylori J99).